Here is a 445-residue protein sequence, read N- to C-terminus: Phosphoglucosamine mutase 1 (445 aa).

Catalysis depends on Ser102, which acts as the Phosphoserine intermediate. Positions 102, 241, 243, and 245 each coordinate Mg(2+). Phosphoserine is present on Ser102.

This sequence belongs to the phosphohexose mutase family. The cofactor is Mg(2+). Activated by phosphorylation.

It carries out the reaction alpha-D-glucosamine 1-phosphate = D-glucosamine 6-phosphate. Functionally, catalyzes the conversion of glucosamine-6-phosphate to glucosamine-1-phosphate. The sequence is that of Phosphoglucosamine mutase 1 from Shewanella frigidimarina (strain NCIMB 400).